The primary structure comprises 688 residues: Glycine--tRNA ligase beta subunit (688 aa).

It belongs to the class-II aminoacyl-tRNA synthetase family. Tetramer of two alpha and two beta subunits.

It localises to the cytoplasm. The enzyme catalyses tRNA(Gly) + glycine + ATP = glycyl-tRNA(Gly) + AMP + diphosphate. This Vibrio atlanticus (strain LGP32) (Vibrio splendidus (strain Mel32)) protein is Glycine--tRNA ligase beta subunit.